A 161-amino-acid polypeptide reads, in one-letter code: Cytochrome c-type biogenesis protein CcmE (161 aa).

Topologically, residues 1-8 are cytoplasmic; the sequence is MNPRRKKR. A helical; Signal-anchor for type II membrane protein membrane pass occupies residues 9 to 29; that stretch reads LGLILALFVGISATVGLMLYA. Topologically, residues 30–161 are periplasmic; it reads LNQNMDLFYT…TEQQKQGTGQ (132 aa). Histidine 129 and tyrosine 133 together coordinate heme. Positions 142 to 161 are disordered; that stretch reads MKKTHEPLQYTEQQKQGTGQ. Positions 151-161 are enriched in polar residues; the sequence is YTEQQKQGTGQ.

Belongs to the CcmE/CycJ family.

The protein localises to the cell inner membrane. Its function is as follows. Heme chaperone required for the biogenesis of c-type cytochromes. Transiently binds heme delivered by CcmC and transfers the heme to apo-cytochromes in a process facilitated by CcmF and CcmH. In Aliivibrio fischeri (strain MJ11) (Vibrio fischeri), this protein is Cytochrome c-type biogenesis protein CcmE.